A 445-amino-acid polypeptide reads, in one-letter code: Phosphoglucosamine mutase (445 aa).

The active-site Phosphoserine intermediate is S102. Mg(2+)-binding residues include S102, D241, D243, and D245. S102 carries the post-translational modification Phosphoserine.

It belongs to the phosphohexose mutase family. Mg(2+) is required as a cofactor. Post-translationally, activated by phosphorylation.

The enzyme catalyses alpha-D-glucosamine 1-phosphate = D-glucosamine 6-phosphate. Functionally, catalyzes the conversion of glucosamine-6-phosphate to glucosamine-1-phosphate. The protein is Phosphoglucosamine mutase of Sodalis glossinidius (strain morsitans).